The sequence spans 208 residues: MSTVGNSTNIFWQESPIGKTERQKLLNQKGCVVWITGLSGSGKSTLACSLSRELNNRGKLSYILDGDNLRHGLNKDLGFKAEDRVENIRRVGEVAKLFADAGLICIASLISPYRKDRDACREMIQNSSFIEVFMNMSLQLCEARDPKGLYKLARAGKIKGFTGIDDPYESPLNCEIELKEKEGECPSPVAMAEEVISYLEDKGFLQNE.

Gly37–Thr45 serves as a coordination point for ATP. Substrate contacts are provided by residues Asp67, Arg70, Arg84, Asn87, Ile110 to Ser111, and Gly160. The active-site Phosphoserine intermediate is the Ser111.

The protein belongs to the APS kinase family. Expressed in root vasculature, root tips, leaf epidermal and guard cells, pollen grains and radicle of immature seeds.

The protein localises to the cytoplasm. Its subcellular location is the cytosol. The enzyme catalyses adenosine 5'-phosphosulfate + ATP = 3'-phosphoadenylyl sulfate + ADP + H(+). It functions in the pathway sulfur metabolism; hydrogen sulfide biosynthesis; sulfite from sulfate: step 2/3. Catalyzes the synthesis of activated sulfate for the sulfation of secondary metabolites, including the glucosinolates. Essential for plant reproduction and viability. In Arabidopsis thaliana (Mouse-ear cress), this protein is Adenylyl-sulfate kinase 3.